We begin with the raw amino-acid sequence, 336 residues long: MAHSLQTLHTFALTSQCQQFVKINNLEQLKTQSFKPPFCLLGEGSNTVFLNDYTGTVIKMATQGVQIKERANDYLISVAAGENWHQLVSELLAKNIPGLENLALIPGTVGAAPVQNIGAYGVELAKFVESVEYFDIANKTFNTLNNAQCEFGYRDSIFKHALKNKAVITTVHLALPKEWQPVLSYGPLQQLAAVTPQAVFEQVIATRNSKLPNPYTLPNAGSFFKNPIITNQCLAALLTTFADLPHYKYGAKHHKVAAGWLIEQAGLKGYRIAGIEVHKQQALVLVNYGQSQGSDLIAMIKHIQHSVFSRYNIMLEHEVRLINNNSECHITAEPTP.

Positions 1–178 (MAHSLQTLHT…TTVHLALPKE (178 aa)) constitute an FAD-binding PCMH-type domain. The active site involves Arg-154. The Proton donor role is filled by Ser-222. Residue Glu-318 is part of the active site.

It belongs to the MurB family. The cofactor is FAD.

Its subcellular location is the cytoplasm. The catalysed reaction is UDP-N-acetyl-alpha-D-muramate + NADP(+) = UDP-N-acetyl-3-O-(1-carboxyvinyl)-alpha-D-glucosamine + NADPH + H(+). It participates in cell wall biogenesis; peptidoglycan biosynthesis. Cell wall formation. This chain is UDP-N-acetylenolpyruvoylglucosamine reductase, found in Pseudoalteromonas translucida (strain TAC 125).